We begin with the raw amino-acid sequence, 294 residues long: Acetyl-coenzyme A carboxylase carboxyl transferase subunit beta (294 aa).

The CoA carboxyltransferase N-terminal domain maps to V25 to D294. C29, C32, C48, and C51 together coordinate Zn(2+). A C4-type zinc finger spans residues C29–C51.

This sequence belongs to the AccD/PCCB family. As to quaternary structure, acetyl-CoA carboxylase is a heterohexamer composed of biotin carboxyl carrier protein (AccB), biotin carboxylase (AccC) and two subunits each of ACCase subunit alpha (AccA) and ACCase subunit beta (AccD). Zn(2+) is required as a cofactor.

Its subcellular location is the cytoplasm. The enzyme catalyses N(6)-carboxybiotinyl-L-lysyl-[protein] + acetyl-CoA = N(6)-biotinyl-L-lysyl-[protein] + malonyl-CoA. It functions in the pathway lipid metabolism; malonyl-CoA biosynthesis; malonyl-CoA from acetyl-CoA: step 1/1. Its function is as follows. Component of the acetyl coenzyme A carboxylase (ACC) complex. Biotin carboxylase (BC) catalyzes the carboxylation of biotin on its carrier protein (BCCP) and then the CO(2) group is transferred by the transcarboxylase to acetyl-CoA to form malonyl-CoA. This Actinobacillus succinogenes (strain ATCC 55618 / DSM 22257 / CCUG 43843 / 130Z) protein is Acetyl-coenzyme A carboxylase carboxyl transferase subunit beta.